The chain runs to 289 residues: Probable protein phosphatase 2C 39 (289 aa).

The PPM-type phosphatase domain maps to 41 to 288 (THGFHLVKGK…DDISVVVVKF (248 aa)). 4 residues coordinate Mn(2+): D78, G79, D240, and D279.

This sequence belongs to the PP2C family. Mg(2+) serves as cofactor. The cofactor is Mn(2+).

The enzyme catalyses O-phospho-L-seryl-[protein] + H2O = L-seryl-[protein] + phosphate. The catalysed reaction is O-phospho-L-threonyl-[protein] + H2O = L-threonyl-[protein] + phosphate. This is Probable protein phosphatase 2C 39 from Arabidopsis thaliana (Mouse-ear cress).